A 342-amino-acid polypeptide reads, in one-letter code: GTPase Obg (342 aa).

One can recognise an Obg domain in the interval methionine 1–isoleucine 159. The OBG-type G domain maps to alanine 160–aspartate 327. Residues glycine 166–serine 173, phenylalanine 191–valine 195, aspartate 212–glycine 215, asparagine 279–aspartate 282, and serine 308–valine 310 contribute to the GTP site. Mg(2+)-binding residues include serine 173 and threonine 193.

The protein belongs to the TRAFAC class OBG-HflX-like GTPase superfamily. OBG GTPase family. Monomer. The cofactor is Mg(2+).

Its subcellular location is the cytoplasm. An essential GTPase which binds GTP, GDP and possibly (p)ppGpp with moderate affinity, with high nucleotide exchange rates and a fairly low GTP hydrolysis rate. Plays a role in control of the cell cycle, stress response, ribosome biogenesis and in those bacteria that undergo differentiation, in morphogenesis control. This is GTPase Obg from Cereibacter sphaeroides (strain ATCC 17029 / ATH 2.4.9) (Rhodobacter sphaeroides).